Reading from the N-terminus, the 599-residue chain is NADH-quinone oxidoreductase subunit C/D (599 aa).

Residues 1 to 189 (MTDLTTHDLA…DPFELTKQKE (189 aa)) form an NADH dehydrogenase I subunit C region. Residues 213 to 599 (DFMFLNLGPN…IDFVMSDVDR (387 aa)) are NADH dehydrogenase I subunit D.

This sequence in the N-terminal section; belongs to the complex I 30 kDa subunit family. It in the C-terminal section; belongs to the complex I 49 kDa subunit family. As to quaternary structure, NDH-1 is composed of 13 different subunits. Subunits NuoB, CD, E, F, and G constitute the peripheral sector of the complex.

The protein resides in the cell inner membrane. It carries out the reaction a quinone + NADH + 5 H(+)(in) = a quinol + NAD(+) + 4 H(+)(out). In terms of biological role, NDH-1 shuttles electrons from NADH, via FMN and iron-sulfur (Fe-S) centers, to quinones in the respiratory chain. The immediate electron acceptor for the enzyme in this species is believed to be ubiquinone. Couples the redox reaction to proton translocation (for every two electrons transferred, four hydrogen ions are translocated across the cytoplasmic membrane), and thus conserves the redox energy in a proton gradient. The polypeptide is NADH-quinone oxidoreductase subunit C/D (Pectobacterium atrosepticum (strain SCRI 1043 / ATCC BAA-672) (Erwinia carotovora subsp. atroseptica)).